Here is a 219-residue protein sequence, read N- to C-terminus: Small ribosomal subunit protein uS3c (219 aa).

The 72-residue stretch at 47–118 (IRNHVRNSSN…KLRMTLVEVL (72 aa)) folds into the KH type-2 domain.

The protein belongs to the universal ribosomal protein uS3 family. In terms of assembly, part of the 30S ribosomal subunit.

It localises to the plastid. The protein resides in the chloroplast. This is Small ribosomal subunit protein uS3c (rps3) from Chara vulgaris (Common stonewort).